Consider the following 307-residue polypeptide: uncharacterized protein (307 aa).

Residues 254–278 are disordered; sequence HSRHHRRHHRRHHHHHHQNSSHSDE. Residues 255–272 are compositionally biased toward basic residues; it reads SRHHRRHHRRHHHHHHQN.

This sequence to yeast YOR062c.

This is an uncharacterized protein from Saccharomyces cerevisiae (strain ATCC 204508 / S288c) (Baker's yeast).